The primary structure comprises 100 residues: Integration host factor subunit alpha (100 aa).

This sequence belongs to the bacterial histone-like protein family. Heterodimer of an alpha and a beta chain.

Its function is as follows. This protein is one of the two subunits of integration host factor, a specific DNA-binding protein that functions in genetic recombination as well as in transcriptional and translational control. The sequence is that of Integration host factor subunit alpha (ihfA) from Zymomonas mobilis subsp. mobilis (strain ATCC 31821 / ZM4 / CP4).